The primary structure comprises 205 residues: MITIVDYQMGNLRSVQKAVERSGVEAEITSDASQIAAAERLILPGVGAFGDAIGEIRRRDLEKPIKDFIASGKPFLGICLGLQMLFEQGFEGGTHEGLGVLGGDVVAFELPAEFKVPHMGWNAVDVKDAGADLGIQSGTHFYFVHSYFVRPADPSVVALTCDYGGEFCAAVRRGNLMATQFHPEKSQGDGLRLMQRFATAPVEVA.

Residues 1–205 (MITIVDYQMG…RFATAPVEVA (205 aa)) form the Glutamine amidotransferase type-1 domain. The active-site Nucleophile is the cysteine 79. Catalysis depends on residues histidine 182 and glutamate 184.

Heterodimer of HisH and HisF.

It is found in the cytoplasm. It catalyses the reaction 5-[(5-phospho-1-deoxy-D-ribulos-1-ylimino)methylamino]-1-(5-phospho-beta-D-ribosyl)imidazole-4-carboxamide + L-glutamine = D-erythro-1-(imidazol-4-yl)glycerol 3-phosphate + 5-amino-1-(5-phospho-beta-D-ribosyl)imidazole-4-carboxamide + L-glutamate + H(+). The catalysed reaction is L-glutamine + H2O = L-glutamate + NH4(+). Its pathway is amino-acid biosynthesis; L-histidine biosynthesis; L-histidine from 5-phospho-alpha-D-ribose 1-diphosphate: step 5/9. Its function is as follows. IGPS catalyzes the conversion of PRFAR and glutamine to IGP, AICAR and glutamate. The HisH subunit catalyzes the hydrolysis of glutamine to glutamate and ammonia as part of the synthesis of IGP and AICAR. The resulting ammonia molecule is channeled to the active site of HisF. This is Imidazole glycerol phosphate synthase subunit HisH from Rhodopirellula baltica (strain DSM 10527 / NCIMB 13988 / SH1).